Here is an 838-residue protein sequence, read N- to C-terminus: MALIDVAISCLNSIREIEEDVKDAIVYIDAGCTESFQFVGAFPLFLELGARAVCSLENMTSLDAVADWNSKSDCAKRIVIMTSRLLNDAHRYMLRCLSTHEGVQRCTVFTSISEGSHSAIPDSPLGPDAYREYETLLVQDYNEHTKKSDKISKDKGVSKFSSALESLTMEPIESENVDISSGGAQGLVVSVHHFPLIICPFTPRAFVLPSQGSVAEASLSRQHEDSLSFGLPPISTGSMSDTDDVPPGATLTAHFLYQLALKMELKLEIFSLGDQSKNVGKILTDMSSVYDVARRKRSAGLLLVDRTLDLITPCCHGDSLFDRIFSSLPRAERFSSQAQLKQGVPSINRPSLDVQVPLGELLNEEPSKIRDSGLPEGIEAFLRGWDSYTSAPQNVGLFNECDKKSTTNWTELLNGSLVATECFRGTPYLEAMIDRKTKDGSVLVKKWLQEALRRENISVNVRARPGYATKPELQAMIKALSQSQSSLLKNKGIIQLGAATAAALDESQSAKWDTFSSAEMMLNVSAGDTSQGLAAQISDLINKSAVAELQAKKNEKPDSSSRGLLSFRDALLLTIVGYILAGENFPTSGSGGPFSWQEEHFLKEAIVDAVLENPSAGNLKFLNGLTEELEGRLNRLKSEETKEIPSDDQLDIDALDDDPWGKWGDEEEEEVDNSKADESYDDMQLKLDLRDRVDSLFRFLHKLSSLRTRNLPLREGSLASESSFPGEPSGNKGLVYRLITKVLSKQEIPGLEYHSSTVGRFIKSGFGRFGLGQAKPSLADQSVILVFVIGGINGIEVLEAQEAVSESGRPDINLVIGGTTLLTPDDMFELLLGQFSHF.

Residues 637–677 (KSEETKEIPSDDQLDIDALDDDPWGKWGDEEEEEVDNSKAD) form a disordered region. Acidic residues predominate over residues 646-658 (SDDQLDIDALDDD).

The protein belongs to the STXBP/unc-18/SEC1 family. Forms a complex with MAG2, ZW10/MIP1 and MIP2 on the endoplasmic reticulum.

The protein localises to the endoplasmic reticulum membrane. In terms of biological role, required for proper maturation of seed storage proteins. Forms a complex with MAG2, ZW10/MIP1 and MIP2 on the endoplasmic reticulum that may be responsible for efficient transport of seed storage proteins. This Arabidopsis thaliana (Mouse-ear cress) protein is Sec1 family domain-containing protein MIP3.